Here is a 298-residue protein sequence, read N- to C-terminus: MRGVDYRWVAALDAVIAQRGFERAAEKLCITQSAVSQRIKQLEKLMAQPLLVREQPPRPTAAGQKLLGLYRRVRLLEQEVLPEITPDDISQPLSVALATNADSLATWLLPALSPLLKSRFIELNLLVEDEARTLDKLRSGEVVGAISMEAGVIPGCVADYLGRMNYLCVASPDFQQKYFSNGVTQANLVSAPGVVFDHHDDMHEVFVQQYFNLPIGSVMKHTVRSSEAFVRIATEGIAYCLIPEVQIQRELDRGDLVNVTPELSLVRNLYWHHWALESGVLTELSERLIQYARQALPQ.

Positions 4–60 (VDYRWVAALDAVIAQRGFERAAEKLCITQSAVSQRIKQLEKLMAQPLLVREQPPRPT) constitute an HTH lysR-type domain. Positions 21–40 (FERAAEKLCITQSAVSQRIK) form a DNA-binding region, H-T-H motif.

Belongs to the LysR transcriptional regulatory family. Homodimer.

Its function is as follows. Controls the transcription of genes involved in arginine and lysine metabolism. In Photobacterium profundum (strain SS9), this protein is HTH-type transcriptional regulator ArgP.